The sequence spans 189 residues: Putative manganese efflux pump MntP (189 aa).

6 helical membrane-spanning segments follow: residues 3–23 (LSATLVLAFAMSMDAFAASIG), 41–61 (LIFGVIEAITPLIGWCIGLFA), 65–85 (ILEWDHWIAFSLLFILGCRMI), 104–124 (FWVLVMTAIATSLDAMAIGVG), 132–152 (IVHTAMAIGLATMIMATLGML), and 165–185 (AEIIGGIVLIGIGFNILYEHI).

Belongs to the MntP (TC 9.B.29) family.

The protein resides in the cell inner membrane. In terms of biological role, probably functions as a manganese efflux pump. The chain is Putative manganese efflux pump MntP from Yersinia enterocolitica serotype O:8 / biotype 1B (strain NCTC 13174 / 8081).